A 535-amino-acid chain; its full sequence is Importin subunit alpha-2 (535 aa).

An IBB domain is found at 1–58; that stretch reads MSLRPNAKTEVRRNRYKVAVDAEEGRRRREDNMVEIRKSKREESLQKKRREGLQANQL. The segment covering 20 to 46 has biased composition (basic and acidic residues); that stretch reads VDAEEGRRRREDNMVEIRKSKREESLQ. Residues 20–67 are disordered; the sequence is VDAEEGRRRREDNMVEIRKSKREESLQKKRREGLQANQLPQFAPSPVP. ARM repeat units lie at residues 67–106, 110–150, 153–192, 195–235, 237–276, 279–318, 321–361, 364–403, 407–446, and 461–500; these read PASS…KLLS, SPPI…NIAS, SENT…NVAG, PRCR…NFCR, KPQP…YLSD, NDKI…NIVT, DLQT…NITA, RDQI…NATS, PDQI…NILK, and NFYA…TYWL.

This sequence belongs to the importin alpha family. In terms of assembly, forms a complex with the importin subunit beta-1 KPNB1. Interacts with A.tumefaciens VirD2 and VirE2. Binds to SWO1.

Its subcellular location is the nucleus envelope. Functionally, binds to conventional NLS motifs and mediates nuclear protein import across the nuclear envelope. Involved in the maintenance of cell wall integrity under salt stress via interaction with SWO1. Acts as a cellular receptor for the nuclear import of the virD2 protein of Agrobacterium, but is not essential for Agrobacterium-mediated root transformation. This chain is Importin subunit alpha-2, found in Arabidopsis thaliana (Mouse-ear cress).